Consider the following 173-residue polypeptide: Putative metal-dependent hydrolase BcerKBAB4_2443 (173 aa).

His65, His156, and His160 together coordinate Zn(2+).

It belongs to the metal hydrolase YfiT family. Homodimer. It depends on Zn(2+) as a cofactor.

The protein resides in the cytoplasm. Its function is as follows. Possible metal-dependent hydrolase. This chain is Putative metal-dependent hydrolase BcerKBAB4_2443, found in Bacillus mycoides (strain KBAB4) (Bacillus weihenstephanensis).